Here is a 331-residue protein sequence, read N- to C-terminus: MSGDEMIFDPTMSKKKKKKKKPFMLDEEGDAQTEETQPSETKEVEPEPTEEKDVDADEEDSRKKDASDDLDDLNFFNQKKKKKKTKKIFDIDEAEEAIKDVKIESDAQEPAEPEDDLDIMLGNKKKKKKNVKFPEEDEILEKDEALEDEDSKKDDGISFSSQTAWAGSERDYTYEELLNRVFNIMREKNPDMVAGEKRKFVMKPPQVVRVGTKKTSFVNFTDICKLLHRQPKHLLAFLLAELGTSGSIDGNNQLVIKGRFQQKQIENVLRRYIKEYVTCHTCRSPDTILQKDTRLYFLQCETCHSRCSVASIKTGFQAVTGKRAQLRAKAN.

Disordered stretches follow at residues 1–75 (MSGD…DLNF) and 97–120 (AIKD…LDIM). At S2 the chain carries N-acetylserine. S2 and S13 each carry phosphoserine. Over residues 13 to 22 (SKKKKKKKKP) the composition is skewed to basic residues. T36 bears the Phosphothreonine mark. Residues 40–51 (ETKEVEPEPTEE) are compositionally biased toward basic and acidic residues. Phosphoserine is present on S67. Residue K102 forms a Glycyl lysine isopeptide (Lys-Gly) (interchain with G-Cter in SUMO2) linkage. A Phosphoserine modification is found at S105. Positions 106-118 (DAQEPAEPEDDLD) are enriched in acidic residues. 2 positions are modified to phosphoserine: S158 and S216. K263 and K291 each carry N6-acetyllysine. The C4-type zinc finger occupies 279 to 303 (CHTCRSPDTILQKDTRLYFLQCETC).

It belongs to the eIF-2-beta/eIF-5 family. In terms of assembly, eukaryotic translation initiation factor 2 eIF2 is a heterotrimeric complex composed of an alpha (EIF2S1), a beta (EIF2S2) and a gamma (EIF2S3) chain. eIF2 is member of the 43S pre-initiation complex (43S PIC). eIF2 forms a complex with at least CELF1/CUGBP1, CALR, CALR3, EIF2S1, EIF2S2, HSP90B1 and HSPA5. Interacts with BZW2/5MP1. Interacts with EIF5.

The protein resides in the cytoplasm. Its subcellular location is the cytosol. In terms of biological role, component of the eIF2 complex that functions in the early steps of protein synthesis by forming a ternary complex with GTP and initiator tRNA. This complex binds to a 40S ribosomal subunit, followed by mRNA binding to form the 43S pre-initiation complex (43S PIC). Junction of the 60S ribosomal subunit to form the 80S initiation complex is preceded by hydrolysis of the GTP bound to eIF2 and release of an eIF2-GDP binary complex. In order for eIF2 to recycle and catalyze another round of initiation, the GDP bound to eIF2 must exchange with GTP by way of a reaction catalyzed by eIF2B. This chain is Eukaryotic translation initiation factor 2 subunit 2 (Eif2s2), found in Mus musculus (Mouse).